A 440-amino-acid chain; its full sequence is Glycerate 2-kinase (440 aa).

Lys-58 is a substrate binding site.

It belongs to the glycerate kinase type-1 family. As to quaternary structure, homodimer. The cofactor is Mg(2+). Ni(2+) serves as cofactor. Mn(2+) is required as a cofactor. It depends on Co(2+) as a cofactor.

The enzyme catalyses (R)-glycerate + ATP = (2R)-2-phosphoglycerate + ADP + H(+). Catalyzes the ATP-dependent phosphorylation of D-glycerate to 2-phosphoglycerate. It can also utilize GTP, CTP, UTP, ADP or pyrophosphate as phosphate donor. This chain is Glycerate 2-kinase (gck), found in Pyrococcus horikoshii (strain ATCC 700860 / DSM 12428 / JCM 9974 / NBRC 100139 / OT-3).